Reading from the N-terminus, the 332-residue chain is Delta-aminolevulinic acid dehydratase (332 aa).

Lysine 199 serves as the catalytic Schiff-base intermediate with substrate. The 5-aminolevulinate site is built by arginine 209 and lysine 221. Residue glutamate 237 participates in Mg(2+) binding. Lysine 252 serves as the catalytic Schiff-base intermediate with substrate. Positions 278 and 317 each coordinate 5-aminolevulinate.

Belongs to the ALAD family. Homooctamer.

The enzyme catalyses 2 5-aminolevulinate = porphobilinogen + 2 H2O + H(+). Its pathway is porphyrin-containing compound metabolism; protoporphyrin-IX biosynthesis; coproporphyrinogen-III from 5-aminolevulinate: step 1/4. Its function is as follows. Catalyzes an early step in the biosynthesis of tetrapyrroles. Binds two molecules of 5-aminolevulinate per subunit, each at a distinct site, and catalyzes their condensation to form porphobilinogen. The polypeptide is Delta-aminolevulinic acid dehydratase (hemB) (Chlamydia pneumoniae (Chlamydophila pneumoniae)).